A 381-amino-acid chain; its full sequence is DNA double-strand break repair protein Mre11 (381 aa).

4 residues coordinate Mn(2+): Asp-9, His-11, Asp-50, and Asp-85. His-86 serves as the catalytic Proton donor. His-156, His-187, and His-189 together coordinate Mn(2+).

It belongs to the MRE11/RAD32 family. In terms of assembly, homodimer. Forms a heterotetramer composed of two Mre11 subunits and two Rad50 subunits. Requires Mn(2+) as cofactor.

Nuclease activity is regulated by Rad50. In terms of biological role, part of the Rad50/Mre11 complex, which is involved in the early steps of DNA double-strand break (DSB) repair. The complex may facilitate opening of the processed DNA ends to aid in the recruitment of HerA and NurA. Mre11 binds to DSB ends and has both double-stranded 3'-5' exonuclease activity and single-stranded endonuclease activity. In Saccharolobus solfataricus (strain ATCC 35092 / DSM 1617 / JCM 11322 / P2) (Sulfolobus solfataricus), this protein is DNA double-strand break repair protein Mre11.